Here is a 98-residue protein sequence, read N- to C-terminus: Large ribosomal subunit protein eL21 (98 aa).

The protein belongs to the eukaryotic ribosomal protein eL21 family.

This Methanocorpusculum labreanum (strain ATCC 43576 / DSM 4855 / Z) protein is Large ribosomal subunit protein eL21.